The primary structure comprises 582 residues: Adenine deaminase (582 aa).

This sequence belongs to the metallo-dependent hydrolases superfamily. Adenine deaminase family. It depends on Mn(2+) as a cofactor.

It catalyses the reaction adenine + H2O + H(+) = hypoxanthine + NH4(+). The protein is Adenine deaminase of Oceanobacillus iheyensis (strain DSM 14371 / CIP 107618 / JCM 11309 / KCTC 3954 / HTE831).